The sequence spans 185 residues: Early nodulin-like protein 17 (185 aa).

The signal sequence occupies residues 1–21; sequence MARRDQLVSFLCFFLIVSAVA. The region spanning 37-137 is the Phytocyanin domain; the sequence is KQYVVGGRSG…GQRLMINVDS (101 aa). N-linked (GlcNAc...) asparagine glycosylation is found at Asn-79 and Asn-94. Residues Cys-93 and Cys-125 are joined by a disulfide bond. The interval 136 to 155 is disordered; it reads DSAPSPSPSPSPAPQEAATA. Ser-156 carries the GPI-anchor amidated serine lipid modification. The propeptide at 157 to 185 is removed in mature form; it reads AATSSSAATAAHALLLAAMAMMGLILGEW.

This sequence belongs to the early nodulin-like (ENODL) family. As to expression, expressed ubiquitously. Accumulates mainly in anthers, stigmas and ovaries.

The protein resides in the cell membrane. Its function is as follows. May act as a carbohydrate transporter. Required for male fertility and seed yield. The sequence is that of Early nodulin-like protein 17 from Oryza sativa subsp. japonica (Rice).